The primary structure comprises 615 residues: DNA mismatch repair protein MutL (615 aa).

Residues 370–397 (EPVAPRYTPAPASGSRPAAPWPNTQPGY) are disordered. The span at 378 to 391 (PAPASGSRPAAPWP) shows a compositional bias: low complexity.

Belongs to the DNA mismatch repair MutL/HexB family.

This protein is involved in the repair of mismatches in DNA. It is required for dam-dependent methyl-directed DNA mismatch repair. May act as a 'molecular matchmaker', a protein that promotes the formation of a stable complex between two or more DNA-binding proteins in an ATP-dependent manner without itself being part of a final effector complex. The sequence is that of DNA mismatch repair protein MutL from Shigella dysenteriae serotype 1 (strain Sd197).